Here is a 196-residue protein sequence, read N- to C-terminus: MPIGVPKVPFRSPGDEDASWVDVINRLYRERLLFLGQEVDSEISNQLIGLMVFLSIEDDTKDLYLFINSPGGWVIPGLGIYDTMQFVQPDVQTICMGLAASMGSFILVGGEITKRLAFPHARVMIHQPASSFYEAQTGEFILEAEELLKLRETITRVYVQRTGKSLWVISEDMERDVFMSATEAQAHGLVDLVAVE.

The active-site Nucleophile is S101. Residue H126 is part of the active site.

The protein belongs to the peptidase S14 family. Component of the chloroplastic Clp protease core complex.

It localises to the plastid. The protein resides in the chloroplast stroma. It catalyses the reaction Hydrolysis of proteins to small peptides in the presence of ATP and magnesium. alpha-casein is the usual test substrate. In the absence of ATP, only oligopeptides shorter than five residues are hydrolyzed (such as succinyl-Leu-Tyr-|-NHMec, and Leu-Tyr-Leu-|-Tyr-Trp, in which cleavage of the -Tyr-|-Leu- and -Tyr-|-Trp bonds also occurs).. Functionally, cleaves peptides in various proteins in a process that requires ATP hydrolysis. Has a chymotrypsin-like activity. Plays a major role in the degradation of misfolded proteins. This chain is ATP-dependent Clp protease proteolytic subunit, found in Morus indica (Mulberry).